A 429-amino-acid polypeptide reads, in one-letter code: Threonine synthase (429 aa).

An N6-(pyridoxal phosphate)lysine modification is found at Lys-108.

It belongs to the threonine synthase family. The cofactor is pyridoxal 5'-phosphate.

The catalysed reaction is O-phospho-L-homoserine + H2O = L-threonine + phosphate. Its pathway is amino-acid biosynthesis; L-threonine biosynthesis; L-threonine from L-aspartate: step 5/5. Its function is as follows. Catalyzes the gamma-elimination of phosphate from L-phosphohomoserine and the beta-addition of water to produce L-threonine. This is Threonine synthase (thrC) from Buchnera aphidicola subsp. Schizaphis graminum (strain Sg).